Consider the following 271-residue polypeptide: Aminoglycoside 3'-phosphotransferase (271 aa).

The Proton acceptor role is filled by Asp-198.

The protein belongs to the aminoglycoside phosphotransferase family.

The enzyme catalyses kanamycin A + ATP = kanamycin 3'-phosphate + ADP + H(+). Resistance to kanamycin and structurally-related aminoglycosides, including amikacin. The protein is Aminoglycoside 3'-phosphotransferase (aphA) of Escherichia coli.